The primary structure comprises 451 residues: Protein-tyrosine kinase 6 (451 aa).

Residues 8–72 (HLGPKYVGLW…PHNYLAEKET (65 aa)) enclose the SH3 domain. Phosphotyrosine occurs at positions 13, 61, 66, and 114. An SH2 domain is found at 78-170 (WFFGCISRSE…SHGLQLSMPC (93 aa)). The interval 171–190 (WKHKTEPLPHWDDWERPREE) is linker. Residues 191-445 (FTLCKKLGAG…DLCEKLTGIT (255 aa)) form the Protein kinase domain. ATP-binding positions include 197-205 (LGAGYFGEV) and Lys-219. Asp-312 functions as the Proton acceptor in the catalytic mechanism. Phosphotyrosine; by autocatalysis is present on Tyr-342. Phosphotyrosine occurs at positions 351 and 447.

Belongs to the protein kinase superfamily. Tyr protein kinase family. BRK/PTK6/SIK subfamily. As to quaternary structure, interacts with KHDRBS1. Interacts with phosphorylated IRS4. Interacts with GAP-A.p65. Interacts with ADAM15. Interacts (via SH3 and SH2 domains) with phosphorylated IRS4. Interacts (via SH3 domain) with SFPQ. Interacts with EGFR and ERBB2. Interacts with STAP2. Interacts with PNX. Interacts with SFPQ. Interacts with PTK/ATK. Interacts with CTNNB1. In terms of processing, autophosphorylated. Autophosphorylation of Tyr-342 leads to an increase of kinase activity. Tyr-447 binds to the SH2 domain when phosphorylated and negatively regulates kinase activity. Expressed only in epithelial tissues, including the skin and lining of the alimentary canal. Restricted to the cell layers immediately above the proliferative cell zone in these epithelia.

The protein localises to the cytoplasm. It localises to the nucleus. The protein resides in the membrane. Its subcellular location is the cell projection. It is found in the ruffle. It catalyses the reaction L-tyrosyl-[protein] + ATP = O-phospho-L-tyrosyl-[protein] + ADP + H(+). Its activity is regulated as follows. Activated by EGF, NRG1 and IGF1. Inhibited by SOCS3 to phosphorylate STAT3. Stabilized in the inactive form by an association between the SH3 domain and the SH2-TK linker region. Interaction between Trp-184 within SH2-TK linker region and the catalytic domain appears essential for positive regulation of kinase activity. Functionally, non-receptor tyrosine-protein kinase implicated in the regulation of a variety of signaling pathways that control the differentiation and maintenance of normal epithelia, as well as tumor growth. Function seems to be context dependent and differ depending on cell type, as well as its intracellular localization. A number of potential nuclear and cytoplasmic substrates have been identified. These include the RNA-binding proteins: KHDRBS1/SAM68, KHDRBS2/SLM1, KHDRBS3/SLM2 and SFPQ/PSF; transcription factors: STAT3 and STAT5A/B and a variety of signaling molecules: ARHGAP35/p190RhoGAP, PXN/paxillin, BTK/ATK, STAP2/BKS. Phosphorylates the GTPase-activating protein ARAP1 following EGF stimulation which enhances EGFR signaling by delaying EGFR down-regulation. Also associates with a variety of proteins that are likely upstream of PTK6 in various signaling pathways, or for which PTK6 may play an adapter-like role. These proteins include ADAM15, EGFR, ERBB2, ERBB3 and IRS4. In normal or non-tumorigenic tissues, PTK6 promotes cellular differentiation and apoptosis. In tumors PTK6 contributes to cancer progression by sensitizing cells to mitogenic signals and enhancing proliferation, anchorage-independent survival and migration/invasion. Association with EGFR, ERBB2, ERBB3 may contribute to mammary tumor development and growth through enhancement of EGF-induced signaling via BTK/AKT and PI3 kinase. Contributes to migration and proliferation by contributing to EGF-mediated phosphorylation of ARHGAP35/p190RhoGAP, which promotes association with RASA1/p120RasGAP, inactivating RhoA while activating RAS. EGF stimulation resulted in phosphorylation of PNX/Paxillin by PTK6 and activation of RAC1 via CRK/CrKII, thereby promoting migration and invasion. PTK6 activates STAT3 and STAT5B to promote proliferation. Nuclear PTK6 may be important for regulating growth in normal epithelia, while cytoplasmic PTK6 might activate oncogenic signaling pathways. This Mus musculus (Mouse) protein is Protein-tyrosine kinase 6 (Ptk6).